A 2560-amino-acid polypeptide reads, in one-letter code: Plipastatin synthase subunit B (2560 aa).

Residues Ile7–Ala310 form a condensation 1 region. The segment at Ile7 to His1042 is domain 1 (tyrosine-activating). An adenylation 1 region spans residues Thr496–Val889. Positions Ala965–Lys1040 constitute a Carrier 1 domain. Ser1000 carries the O-(pantetheine 4'-phosphoryl)serine modification. The condensation 2 stretch occupies residues Gln1052–Glu1342. The interval Gln1052–Ile2553 is domain 2 (D-allo-threonine-activating). Residues Thr1527–Val1927 are adenylation 2. In terms of domain architecture, Carrier 2 spans Ser2006–Val2080. Ser2041 is modified (O-(pantetheine 4'-phosphoryl)serine). The interval Val2088–Ile2553 is epimerization.

The protein belongs to the ATP-dependent AMP-binding enzyme family. The cofactor is pantetheine 4'-phosphate.

Functionally, this protein is a multifunctional enzyme, able to activate and polymerize the amino acids Tyr and Thr as part of the biosynthesis of the lipopeptide antibiotic plipastatin. The Thr residue is further converted to the D-allo-isomer form. The activation sites for these amino acids consist of individual domains. This chain is Plipastatin synthase subunit B (ppsB), found in Bacillus subtilis (strain 168).